The primary structure comprises 228 residues: Cytochrome c oxidase subunit 2 (228 aa).

At 1–26 (MRTWSNFNLQNSASPLMEQIIFFHDH) the chain is on the mitochondrial intermembrane side. The helical transmembrane segment at 27-48 (TLIILIMITILVGYIMINLFFN) threads the bilayer. Residues 49 to 62 (KFINRFFLVGQMIE) lie on the Mitochondrial matrix side of the membrane. The helical transmembrane segment at 63–82 (LIWTVLPAITLIFIALPSLR) threads the bilayer. Residues 83–228 (LLYLLDELNN…FINWINNYSY (146 aa)) are Mitochondrial intermembrane-facing. Positions 161, 196, 198, 200, 204, and 207 each coordinate Cu cation. Glutamate 198 provides a ligand contact to Mg(2+).

The protein belongs to the cytochrome c oxidase subunit 2 family. In terms of assembly, component of the cytochrome c oxidase (complex IV, CIV), a multisubunit enzyme composed of a catalytic core of 3 subunits and several supernumerary subunits. The complex exists as a monomer or a dimer and forms supercomplexes (SCs) in the inner mitochondrial membrane with ubiquinol-cytochrome c oxidoreductase (cytochrome b-c1 complex, complex III, CIII). Cu cation is required as a cofactor.

It localises to the mitochondrion inner membrane. The catalysed reaction is 4 Fe(II)-[cytochrome c] + O2 + 8 H(+)(in) = 4 Fe(III)-[cytochrome c] + 2 H2O + 4 H(+)(out). Component of the cytochrome c oxidase, the last enzyme in the mitochondrial electron transport chain which drives oxidative phosphorylation. The respiratory chain contains 3 multisubunit complexes succinate dehydrogenase (complex II, CII), ubiquinol-cytochrome c oxidoreductase (cytochrome b-c1 complex, complex III, CIII) and cytochrome c oxidase (complex IV, CIV), that cooperate to transfer electrons derived from NADH and succinate to molecular oxygen, creating an electrochemical gradient over the inner membrane that drives transmembrane transport and the ATP synthase. Cytochrome c oxidase is the component of the respiratory chain that catalyzes the reduction of oxygen to water. Electrons originating from reduced cytochrome c in the intermembrane space (IMS) are transferred via the dinuclear copper A center (CU(A)) of subunit 2 and heme A of subunit 1 to the active site in subunit 1, a binuclear center (BNC) formed by heme A3 and copper B (CU(B)). The BNC reduces molecular oxygen to 2 water molecules using 4 electrons from cytochrome c in the IMS and 4 protons from the mitochondrial matrix. This Galleria mellonella (Greater wax moth) protein is Cytochrome c oxidase subunit 2 (COII).